We begin with the raw amino-acid sequence, 1481 residues long: Cystic fibrosis transmembrane conductance regulator (1481 aa).

Over 1-77 the chain is Cytoplasmic; that stretch reads MQRSPLEKAS…KLINALRRCF (77 aa). The helical transmembrane segment at 78-98 threads the bilayer; sequence FWRFTFYGILLYLGEVTKAVQ. The ABC transmembrane type-1 1 domain occupies 81–365; it reads FTFYGILLYL…WAVQTWYDSL (285 aa). The Extracellular portion of the chain corresponds to 99–122; that stretch reads PLLLGRIIASYDPDNKTERSIAIY. A helical transmembrane segment spans residues 123–146; that stretch reads LGIGLCLLFIVRTLLLHPAIFGLH. Residues 147-195 lie on the Cytoplasmic side of the membrane; that stretch reads HIGMQMRIAMFSLIYKKTLKLSSRVLDKISIGQLVSLLSNNLNKFDEGL. A helical transmembrane segment spans residues 196-216; it reads ALAHFVWIAPLQVALLMGLIW. Over 217–222 the chain is Extracellular; sequence ELLQAS. The chain crosses the membrane as a helical span at residues 223-243; it reads AFCGLGFLIVLALFQAGLGRM. At 244-298 the chain is on the cytoplasmic side; sequence MMKYRDQRAGKINERLVITSEMIENIQSVKAYCWEEAMEKMIENLRQTELKLTRK. The chain crosses the membrane as a helical span at residues 299–319; the sequence is AAYVRYFNSSAFFFSGFFVVF. Topologically, residues 320–339 are extracellular; the sequence is LSVLPYALIKGIILRKIFTT. A helical transmembrane segment spans residues 340 to 358; that stretch reads ISFCIVLRMAVTRQFPWAV. Topologically, residues 359-858 are cytoplasmic; sequence QTWYDSLGAI…YLRYITLHKS (500 aa). Residues Trp401, Ser434, 458 to 465, and Gln493 contribute to the ATP site; that span reads GSTGAGKT. Residues 423–646 enclose the ABC transporter 1 domain; that stretch reads NDDNNLFFSN…RPDFSSKLMG (224 aa). Residue Cys524 is the site of S-palmitoyl cysteine attachment. Phosphoserine is present on residues Ser549 and Ser660. The segment at 654 to 831 is disordered R region; sequence SSERRNSILT…EEINEEDLKE (178 aa). Phosphoserine; by PKA is present on Ser670. Position 686 is a phosphoserine (Ser686). Lys688 is covalently cross-linked (Glycyl lysine isopeptide (Lys-Gly) (interchain with G-Cter in ubiquitin)). Phosphoserine occurs at positions 700 and 712. Position 717 is a phosphothreonine (Thr717). Phosphoserine is present on residues Ser737, Ser753, Ser768, Ser790, Ser795, and Ser813. The chain crosses the membrane as a helical span at residues 859 to 879; sequence LIFVLIWCLVIFLAEVAASLV. The ABC transmembrane type-1 2 domain occupies 859 to 1155; that stretch reads LIFVLIWCLV…AVNSSIDVDS (297 aa). Over 880–918 the chain is Extracellular; the sequence is VLWLLRNTPFQDKGNSTYSRNNSYAVIITNTSSYYVFYI. 3 N-linked (GlcNAc...) asparagine glycosylation sites follow: Asn894, Asn900, and Asn909. Residues 919-939 form a discontinuously helical membrane-spanning segment; that stretch reads YVGVADTLLALGFFRGLPLVH. The Cytoplasmic portion of the chain corresponds to 940-990; sequence TLITVSKILHHKMLHSVLQAPMSTLNTLKAGGILNRFSKDIAILDDLLPLT. Residues 991-1011 traverse the membrane as a helical segment; it reads IFDFIQLLLIVIGAIAVVSVL. Over 1012–1013 the chain is Extracellular; the sequence is QP. The helical transmembrane segment at 1014–1034 threads the bilayer; it reads YIFLATVPVIAAFVLLRAYFL. Over 1035-1095 the chain is Cytoplasmic; that stretch reads QTSQQLKQLE…TANWFLYLST (61 aa). Residues 1096–1116 traverse the membrane as a helical segment; that stretch reads LRWFQMRIEMIFVIFFIAVTF. At 1117–1130 the chain is on the extracellular side; it reads ISILTTGEGEGTVG. The helical transmembrane segment at 1131-1151 threads the bilayer; sequence IILTLAMNIMSTLQWAVNSSI. The Cytoplasmic portion of the chain corresponds to 1152 to 1481; sequence DVDSLMRSVS…TEEEVQETRL (330 aa). Positions 1211–1444 constitute an ABC transporter 2 domain; the sequence is MTIKDLTAKY…KSLFRQAISH (234 aa). Residues Tyr1220 and 1245–1252 each bind ATP; that span reads GRTGSGKS. Residues 1387–1481 form an interaction with GORASP2 region; that stretch reads RALKQAFADC…TEEEVQETRL (95 aa). Cys1396 carries the S-palmitoyl cysteine lipid modification. 2 positions are modified to phosphoserine: Ser1445 and Ser1457. The disordered stretch occupies residues 1453–1481; sequence HRNSSKYKSRPQIASLKEETEEEVQETRL. The span at 1471 to 1481 shows a compositional bias: acidic residues; the sequence is ETEEEVQETRL. The PDZ-binding signature appears at 1479-1481; it reads TRL.

Belongs to the ABC transporter superfamily. ABCC family. CFTR transporter (TC 3.A.1.202) subfamily. In terms of assembly, monomer; does not require oligomerization for channel activity. May form oligomers in the membrane. Interacts with SLC26A3, SLC26A6 and NHERF1. Interacts with SHANK2. Interacts with MYO6. Interacts (via C-terminus) with GOPC (via PDZ domain); this promotes CFTR internalization and thereby decreases channel activity. Interacts with SLC4A7 through NHERF1. Found in a complex with MYO5B and RAB11A. Interacts with ANO1. Interacts with SLC26A8. Interacts with AHCYL1; the interaction increases CFTR activity. Interacts with CSE1L. The core-glycosylated form interacts with GORASP2 (via PDZ GRASP-type 1 domain) in respone to ER stress. Interacts with MARCHF2; the interaction leads to CFTR ubiqtuitination and degradation. Interacts with ADGRG2. In terms of processing, N-glycosylated. Post-translationally, phosphorylated; cAMP treatment promotes phosphorylation and activates the channel. Dephosphorylation decreases the ATPase activity (in vitro). Phosphorylation at PKA sites activates the channel. Phosphorylation at PKC sites enhances the response to phosphorylation by PKA. Phosphorylated by AMPK; this inhibits channel activity. Ubiquitinated, leading to its degradation in the lysosome. Deubiquitination by USP10 in early endosomes enhances its endocytic recycling to the cell membrane. Ubiquitinated by RNF185 during ER stress. Ubiquitinated by MARCHF2.

The protein localises to the apical cell membrane. It is found in the early endosome membrane. Its subcellular location is the cell membrane. The protein resides in the recycling endosome membrane. It localises to the endoplasmic reticulum membrane. The protein localises to the nucleus. It catalyses the reaction ATP + H2O + closed Cl(-) channel = ADP + phosphate + open Cl(-) channel.. The enzyme catalyses chloride(in) = chloride(out). It carries out the reaction hydrogencarbonate(in) = hydrogencarbonate(out). The catalysed reaction is ATP + H2O = ADP + phosphate + H(+). Functionally, epithelial ion channel that plays an important role in the regulation of epithelial ion and water transport and fluid homeostasis. Mediates the transport of chloride ions across the cell membrane. Possesses an intrinsic ATPase activity and utilizes ATP to gate its channel; the passive flow of anions through the channel is gated by cycles of ATP binding and hydrolysis by the ATP-binding domains. The ion channel is also permeable to HCO(3)(-); selectivity depends on the extracellular chloride concentration. Exerts its function also by modulating the activity of other ion channels and transporters. Contributes to the regulation of the pH and the ion content of the epithelial fluid layer. Modulates the activity of the epithelial sodium channel (ENaC) complex, in part by regulating the cell surface expression of the ENaC complex. May regulate bicarbonate secretion and salvage in epithelial cells by regulating the transporter SLC4A7. Can inhibit the chloride channel activity of ANO1. Plays a role in the chloride and bicarbonate homeostasis during sperm epididymal maturation and capacitation. The polypeptide is Cystic fibrosis transmembrane conductance regulator (Callithrix jacchus (White-tufted-ear marmoset)).